We begin with the raw amino-acid sequence, 249 residues long: 2,3-bisphosphoglycerate-dependent phosphoglycerate mutase (249 aa).

Substrate is bound by residues 9–16 (RHGQSQWN), 22–23 (TG), R61, 88–91 (ERHY), K99, 115–116 (RR), and 184–185 (GN). H10 acts as the Tele-phosphohistidine intermediate in catalysis. E88 serves as the catalytic Proton donor/acceptor.

This sequence belongs to the phosphoglycerate mutase family. BPG-dependent PGAM subfamily. Homodimer.

The catalysed reaction is (2R)-2-phosphoglycerate = (2R)-3-phosphoglycerate. It participates in carbohydrate degradation; glycolysis; pyruvate from D-glyceraldehyde 3-phosphate: step 3/5. In terms of biological role, catalyzes the interconversion of 2-phosphoglycerate and 3-phosphoglycerate. This chain is 2,3-bisphosphoglycerate-dependent phosphoglycerate mutase, found in Xylella fastidiosa (strain 9a5c).